A 368-amino-acid chain; its full sequence is Propane 2-monooxygenase, hydroxylase component small subunit (368 aa).

It belongs to the TmoE/XamoE family. In terms of assembly, the propane 2-monooxygenase multicomponent enzyme system is composed of an electron transfer component and a monooxygenase component interacting with the effector protein MimD. The electron transfer component is composed of a reductase (MimB), and the monooxygenase component is formed by a large subunit (MimA) and a small subunit (MimC). Requires the presence of the chaperonin-like protein MimG to ensure a productive folding, resulting of a soluble MimC, which leads to the active form of MimABCD.

It carries out the reaction propane + NADH + O2 + H(+) = propan-2-ol + NAD(+) + H2O. It catalyses the reaction acetone + NADH + O2 + H(+) = hydroxyacetone + NAD(+) + H2O. The catalysed reaction is butan-2-one + NADH + O2 + H(+) = 1-hydroxy-2-butanone + NAD(+) + H2O. The enzyme catalyses phenol + NADH + O2 + H(+) = hydroquinone + NAD(+) + H2O. In terms of biological role, component of the propane 2-monooxygenase multicomponent enzyme system which is involved in the degradation of propane via the O2-dependent hydroxylation of propane. Also involved in the degradation of acetone via the O2-dependent hydroxylation of acetone. Also able to catalyze the oxidation of phenol, methylethylketone (2-butanone), 1-propanol and 2-propanol. This Mycolicibacterium goodii (Mycobacterium goodii) protein is Propane 2-monooxygenase, hydroxylase component small subunit.